The chain runs to 496 residues: Probable cytosol aminopeptidase (496 aa).

Residues K261 and D266 each coordinate Mn(2+). K273 is a catalytic residue. Mn(2+) contacts are provided by D284, D343, and E345. R347 is an active-site residue.

It belongs to the peptidase M17 family. Requires Mn(2+) as cofactor.

The protein resides in the cytoplasm. The catalysed reaction is Release of an N-terminal amino acid, Xaa-|-Yaa-, in which Xaa is preferably Leu, but may be other amino acids including Pro although not Arg or Lys, and Yaa may be Pro. Amino acid amides and methyl esters are also readily hydrolyzed, but rates on arylamides are exceedingly low.. It carries out the reaction Release of an N-terminal amino acid, preferentially leucine, but not glutamic or aspartic acids.. In terms of biological role, presumably involved in the processing and regular turnover of intracellular proteins. Catalyzes the removal of unsubstituted N-terminal amino acids from various peptides. The protein is Probable cytosol aminopeptidase of Bacillus pumilus (strain SAFR-032).